The chain runs to 559 residues: Glucosylglycerate phosphorylase (559 aa).

Catalysis depends on Asp229, which acts as the Nucleophile.

This sequence belongs to the glycosyl hydrolase 13 family. Glucosylglycerate phosphorylase subfamily.

The catalysed reaction is (2R)-2-O-(alpha-D-glucopyranosyl)-glycerate + phosphate = (R)-glycerate + alpha-D-glucose 1-phosphate. Catalyzes the reversible phosphorolysis of glucosylglycerate into alpha-D-glucose 1-phosphate (Glc1P) and D-glycerate (also called (R)-glycerate). May be a regulator of intracellular levels of glucosylglycerate, a compatible solute that primarily protects organisms facing salt stress and very specific nutritional constraints. Cannot catalyze the phosphorolysis of sucrose. Does not act on other sugars such as alpha-D-galactose 1-phosphate, alpha-D-mannose 1-phosphate or beta-D-glucose 1-phosphate; in vitro D-erythronate can substitute for D-glycerate with a much lower efficiency. This Escherichia coli (strain K12) protein is Glucosylglycerate phosphorylase (ycjM).